A 360-amino-acid polypeptide reads, in one-letter code: uncharacterized protein (360 aa).

The 30-residue stretch at 11 to 40 folds into the 4Fe-4S ferredoxin-type domain; that stretch reads KEEVWDTNRCSGCGACVAVCPVNNLYFREE.

This sequence belongs to the FrhB family.

This is an uncharacterized protein from Methanocaldococcus jannaschii (strain ATCC 43067 / DSM 2661 / JAL-1 / JCM 10045 / NBRC 100440) (Methanococcus jannaschii).